The chain runs to 448 residues: Immunoglobulin G-binding protein G (448 aa).

Residues 1 to 33 (MEKEKKVKYFLRKSAFGLASVSAAFLVGSTVFA) form the signal peptide. 4 repeat units span residues 104–140 (LAKA…IKDL), 179–215 (LAEA…VKEL), 228–282 (TYKL…TVTE), and 298–352 (TYKL…TVTE). Residues 104–215 (LAKAKADALK…AKTVEGVKEL (112 aa)) form a 2 X 37 AA repeats region. The tract at residues 228-352 (TYKLILNGKT…DATKTFTVTE (125 aa)) is 2 X 55 AA repeats. The interval 358-422 (PGDAPTEPEK…TLPTTGEGSN (65 aa)) is disordered. The segment covering 384–412 (AKDDAKKDDTKKEDAKKPEAKKDDAKKAE) has biased composition (basic and acidic residues). Positions 386 to 410 (DDAKKDDTKKEDAKKPEAKKDDAKK) are 5 X 5 AA repeats of [DE]-D-A-K-K. Residues 414-418 (LPTTG) carry the LPXTG sorting signal motif. A Pentaglycyl murein peptidoglycan amidated threonine modification is found at Thr-417. Positions 418-448 (GEGSNPFFTAAALAVMAGAGALAVASKRKED) are cleaved as a propeptide — removed by sortase.

Its subcellular location is the secreted. It is found in the cell wall. Its function is as follows. Binds to the constant Fc region of IgG with high affinity. This is Immunoglobulin G-binding protein G (spg) from Streptococcus sp. group G.